A 142-amino-acid chain; its full sequence is Large-conductance mechanosensitive channel (142 aa).

2 helical membrane-spanning segments follow: residues 10–30 (FAIK…AAFS) and 86–106 (GNFI…FLMV).

The protein belongs to the MscL family. Homopentamer.

It is found in the cell inner membrane. Channel that opens in response to stretch forces in the membrane lipid bilayer. May participate in the regulation of osmotic pressure changes within the cell. In Polaromonas naphthalenivorans (strain CJ2), this protein is Large-conductance mechanosensitive channel.